The primary structure comprises 401 residues: Acetylornithine aminotransferase (401 aa).

Pyridoxal 5'-phosphate is bound by residues 121-122 (GA) and F154. R157 contacts N(2)-acetyl-L-ornithine. 239–242 (DEVQ) contacts pyridoxal 5'-phosphate. K268 is modified (N6-(pyridoxal phosphate)lysine). S296 is a binding site for N(2)-acetyl-L-ornithine. Residue T297 coordinates pyridoxal 5'-phosphate.

The protein belongs to the class-III pyridoxal-phosphate-dependent aminotransferase family. ArgD subfamily. As to quaternary structure, homodimer. It depends on pyridoxal 5'-phosphate as a cofactor.

The protein resides in the cytoplasm. It carries out the reaction N(2)-acetyl-L-ornithine + 2-oxoglutarate = N-acetyl-L-glutamate 5-semialdehyde + L-glutamate. Its pathway is amino-acid biosynthesis; L-arginine biosynthesis; N(2)-acetyl-L-ornithine from L-glutamate: step 4/4. This Myxococcus xanthus protein is Acetylornithine aminotransferase.